Reading from the N-terminus, the 605-residue chain is Ubiquitin carboxyl-terminal hydrolase 2 (605 aa).

Positions 1-200 are necessary for interaction with MDM4; it reads MSQLSSTLKR…CPEYLVDYLE (200 aa). 2 disordered regions span residues 71–107 and 237–264; these read LLDY…GSGL and WETG…KSAQ. The segment covering 90 to 100 has biased composition (basic and acidic residues); it reads KRAESQTRGTE. Residues 245 to 255 show a composition bias toward low complexity; that stretch reads PGPSRSSSPGR. Positions 267 to 599 constitute a USP domain; that stretch reads AGLRNLGNTC…DAYLLFYELA (333 aa). The active-site Nucleophile is the Cys-276. Residues 403-503 are necessary for interaction with MDM4; that stretch reads YLEREDSRIG…FPKILVLHLK (101 aa). Cys-425, Cys-428, Cys-476, and Cys-479 together coordinate Zn(2+). His-557 (proton acceptor) is an active-site residue.

Belongs to the peptidase C19 family. USP2 subfamily. As to quaternary structure, homooligomer. Found in trimeric complex with MDM2 and MDM4 and USP2. Interacts with CCND1; the interaction is direct and promotes its stabilization by antagonizing ubiquitin-dependent degradation. Interacts (via N-terminus and C-terminus) with MDM2. Interacts with MDM4. Interacts with PER1. Interacts with KCNQ1; counteracts the NEDD4L-specific down-regulation of I(Ks) and restore plasma membrane localization of KCNQ1. Isoform 4: Interacts with NHERF4 and CLTC. As to expression, expressed in mesangial cells of the kidney and in different types of glomerulonephritides (at protein level).

The protein localises to the cytoplasm. It localises to the perinuclear region. Its subcellular location is the nucleus. It is found in the membrane. The enzyme catalyses Thiol-dependent hydrolysis of ester, thioester, amide, peptide and isopeptide bonds formed by the C-terminal Gly of ubiquitin (a 76-residue protein attached to proteins as an intracellular targeting signal).. Its activity is regulated as follows. Cleavage is inhibited by ubiquitin in a dosage-dependent manner. Cleavage is blocked by ubiquitin aldehyde. Hydrolase that deubiquitinates polyubiquitinated target proteins such as MDM2, MDM4 and CCND1. Isoform 1 and isoform 4 possess both ubiquitin-specific peptidase and isopeptidase activities. Deubiquitinates MDM2 without reversing MDM2-mediated p53/TP53 ubiquitination and thus indirectly promotes p53/TP53 degradation and limits p53 activity. Has no deubiquitinase activity against p53/TP53. Prevents MDM2-mediated degradation of MDM4. Plays a role in the G1/S cell-cycle progression in normal and cancer cells. Regulates the circadian clock by modulating its intrinsic circadian rhythm and its capacity to respond to external cues. Associates with clock proteins and deubiquitinates core clock component PER1 but does not affect its overall stability. Regulates the nucleocytoplasmic shuttling and nuclear retention of PER1 and its repressive role on the clock transcription factors CLOCK and BMAL1. Plays a role in the regulation of myogenic differentiation of embryonic muscle cells. In terms of biological role, circadian clock output effector that regulates Ca(2+) absorption in the small intestine. Probably functions by regulating protein levels of the membrane scaffold protein NHERF4 in a rhythmic manner, and is therefore likely to control Ca(2+) membrane permeability mediated by the Ca(2+) channel TRPV6 in the intestine. The polypeptide is Ubiquitin carboxyl-terminal hydrolase 2 (USP2) (Homo sapiens (Human)).